Here is a 990-residue protein sequence, read N- to C-terminus: A-type ATP synthase subunit B (990 aa).

The DOD-type homing endonuclease domain occupies 491–614; the sequence is VAGLIASDGS…LQLLLKRLGV (124 aa).

The protein belongs to the ATPase alpha/beta chains family. As to quaternary structure, has multiple subunits with at least A(3), B(3), C, D, E, F, H, I and proteolipid K(x). This protein undergoes a protein self splicing that involves a post-translational excision of the VDE intervening region (intein) followed by peptide ligation.

Its subcellular location is the cell membrane. Component of the A-type ATP synthase that produces ATP from ADP in the presence of a proton gradient across the membrane. The B chain is a regulatory subunit. In Methanopyrus kandleri (strain AV19 / DSM 6324 / JCM 9639 / NBRC 100938), this protein is A-type ATP synthase subunit B.